Consider the following 132-residue polypeptide: Large-conductance mechanosensitive channel (132 aa).

The next 2 membrane-spanning stretches (helical) occupy residues 14 to 34 (VIDL…VSSL) and 67 to 87 (GNFI…FMFV).

The protein belongs to the MscL family. As to quaternary structure, homopentamer.

The protein localises to the cell membrane. In terms of biological role, channel that opens in response to stretch forces in the membrane lipid bilayer. May participate in the regulation of osmotic pressure changes within the cell. The sequence is that of Large-conductance mechanosensitive channel from Bacillus cereus (strain AH820).